The chain runs to 250 residues: Sugar fermentation stimulation protein homolog (250 aa).

Belongs to the SfsA family.

This chain is Sugar fermentation stimulation protein homolog, found in Synechococcus sp. (strain CC9311).